The sequence spans 1072 residues: DNA-directed RNA polymerase subunit beta (1072 aa).

The protein belongs to the RNA polymerase beta chain family. In plastids the minimal PEP RNA polymerase catalytic core is composed of four subunits: alpha, beta, beta', and beta''. When a (nuclear-encoded) sigma factor is associated with the core the holoenzyme is formed, which can initiate transcription.

It localises to the plastid. Its subcellular location is the chloroplast. The catalysed reaction is RNA(n) + a ribonucleoside 5'-triphosphate = RNA(n+1) + diphosphate. In terms of biological role, DNA-dependent RNA polymerase catalyzes the transcription of DNA into RNA using the four ribonucleoside triphosphates as substrates. The protein is DNA-directed RNA polymerase subunit beta of Arabis hirsuta (Hairy rock-cress).